Consider the following 514-residue polypeptide: Na(+)/H(+) antiporter NhaB (514 aa).

12 consecutive transmembrane segments (helical) span residues 23–43, 63–83, 97–117, 120–140, 144–164, 202–222, 238–258, 303–323, 357–377, 391–411, 447–467, and 475–495; these read LALIAFLIANPLIFFINPFVA, PLLPGGLLAIEAVIIGMTSAA, LLLMFMVAGIYFMKQLLLFIF, LLLSIRSKMLLSLAFCMAAAF, FLDALTVVAVVISVAVGFYGI, LMMHAGVGTALGGVMTMVGEP, FFLRMSPVTVPVLICGLFTCV, AIIGVWLVTALALHLAEVGLI, LTVFFSIVAVIIDQHLFAPII, LFYLFNGLLSSISDNVFVGTI, ATPNGQAAFLFLLTSALAPLI, and VWMALPYTLVLTLVGLLCVEF.

The protein belongs to the NhaB Na(+)/H(+) (TC 2.A.34) antiporter family.

The protein resides in the cell inner membrane. The enzyme catalyses 2 Na(+)(in) + 3 H(+)(out) = 2 Na(+)(out) + 3 H(+)(in). Its function is as follows. Na(+)/H(+) antiporter that extrudes sodium in exchange for external protons. In Citrobacter koseri (strain ATCC BAA-895 / CDC 4225-83 / SGSC4696), this protein is Na(+)/H(+) antiporter NhaB.